A 230-amino-acid polypeptide reads, in one-letter code: Ribonuclease 3 (230 aa).

An RNase III domain is found at 6–135 (TTELKERYGI…FLGALYLDQK (130 aa)). Residue Glu-48 coordinates Mg(2+). Residue Asp-52 is part of the active site. Positions 121 and 124 each coordinate Mg(2+). The active site involves Glu-124. The region spanning 161 to 230 (DHKTQLQEVL…AERALKSIPQ (70 aa)) is the DRBM domain.

It belongs to the ribonuclease III family. As to quaternary structure, homodimer. It depends on Mg(2+) as a cofactor.

It is found in the cytoplasm. It carries out the reaction Endonucleolytic cleavage to 5'-phosphomonoester.. Digests double-stranded RNA. Involved in the processing of primary rRNA transcript to yield the immediate precursors to the large and small rRNAs (23S and 16S). Processes some mRNAs, and tRNAs when they are encoded in the rRNA operon. Processes pre-crRNA and tracrRNA of type II CRISPR loci if present in the organism. This is Ribonuclease 3 from Enterococcus faecalis (strain ATCC 700802 / V583).